An 837-amino-acid chain; its full sequence is MEPAAGGPGPLIVNNKQPQPPPPPPPATAQPPPGAPRAAAGLLPGGKAREFNRNQRKDSEGYSESPDLEFEYADTDKWAAELSELYSYTEGPEFLMNRKCFEEDFRIHVTDKKWTELDTNQHRTHAMRLLDGLEVTAREKRLKVARAILYVAQGTFGECSSEAEVQSWMRYNIFLLLEVGTFNALVELLNMEIDNGAACSSAVRKPAISLADSTDLRVLLNIMYLIVETVHQECEGDKAEWSTMRQTFRAELGSPLYNNEPFAIMLFGMVTKFCSGHAPHFPMKKVLLLLWKTVLCTLGGFEELQSMKAEKRSILGLPPLPEDSIKVIRNMRAASPPASASDSIEQQQKRGRREHKALIKQDNLDAFNERDPYKADDSREEEEENDDDNSLEGETFPLERDEVMPPPLQHPQTDRLTCPKGLPWAPKVREKDIEMFLESSRSKFMGYTLGSDTNTVVGLPRPIHESIKTLKQHKYTSIAEVQAQMEEEYLRSPLSGGEEEVEQVPAETLYQGLLPSLPQYMIALLKILLAAAPTSKAKTDSINILADVLPEEMPTTVLQSMKLGVDVNRHKEVIVKAISAVLLLLLKHFKLNHVYQFEYMAQHLVFANCIPLILKFFNQNIMSYITAKNSISVLDYPHCVVHELPELTAESLEAGDSNQFCWRNLFSCINLLRILNKLTKWKHSRTMMLVVFKSAPILKRALKVKQAMMQLYVLKLLKVQTKYLGRQWRKSNMKTMSAIYQKVRHRLNDDWAYGNDLDARPWDFQAEECALRANIERFNARRYDRAHSNPDFLPVDNCLQSVLGQRVDLPEDFQMNYDLWLEREVFSKPISWEELLQ.

Met-1 bears the N-acetylmethionine mark. 2 disordered regions span residues 1-67 (MEPA…ESPD) and 333-423 (AASP…KGLP). Over residues 18 to 35 (PQPPPPPPPATAQPPPGA) the composition is skewed to pro residues. The segment covering 36 to 46 (PRAAAGLLPGG) has biased composition (low complexity). Residues 47-60 (KAREFNRNQRKDSE) show a composition bias toward basic and acidic residues. A phosphoserine mark is found at Ser-59, Ser-335, and Ser-339. Residues 333-343 (AASPPASASDS) show a composition bias toward low complexity. A compositionally biased stretch (basic and acidic residues) spans 356-377 (KALIKQDNLDAFNERDPYKADD). The span at 378-391 (SREEEEENDDDNSL) shows a compositional bias: acidic residues. Ser-788 carries the post-translational modification Phosphoserine. The tract at residues 796-837 (DNCLQSVLGQRVDLPEDFQMNYDLWLEREVFSKPISWEELLQ) is required for STRIPAK core complex formation.

It belongs to the STRIP family. In terms of assembly, part of the core of STRIPAK complexes composed of PP2A catalytic and scaffolding subunits, the striatins (PP2A regulatory subunits), the striatin-associated proteins MOB4, STRIP1 and STRIP2, PDCD10 and members of the STE20 kinases, such as STK24 and STK26. The STRIPAK complex can be extended by adapter proteins such as SLMAP:SIKE1, CTTNBP2 or CTTNBP2NL. Interacts with CDC42BPB. Interacts with CTTNBP2NL.

It localises to the cytoplasm. Plays a role in the regulation of cell morphology and cytoskeletal organization. Required in the cortical actin filament dynamics and cell shape. Part of the striatin-interacting phosphatase and kinase (STRIPAK) complexes. STRIPAK complexes have critical roles in protein (de)phosphorylation and are regulators of multiple signaling pathways including Hippo, MAPK, nuclear receptor and cytoskeleton remodeling. Different types of STRIPAK complexes are involved in a variety of biological processes such as cell growth, differentiation, apoptosis, metabolism and immune regulation. This Pongo abelii (Sumatran orangutan) protein is Striatin-interacting protein 1 (STRIP1).